Reading from the N-terminus, the 157-residue chain is SsrA-binding protein (157 aa).

The disordered stretch occupies residues Gly126 to Gly157. Residues Gln132–Gly157 are compositionally biased toward basic and acidic residues.

It belongs to the SmpB family.

The protein localises to the cytoplasm. Required for rescue of stalled ribosomes mediated by trans-translation. Binds to transfer-messenger RNA (tmRNA), required for stable association of tmRNA with ribosomes. tmRNA and SmpB together mimic tRNA shape, replacing the anticodon stem-loop with SmpB. tmRNA is encoded by the ssrA gene; the 2 termini fold to resemble tRNA(Ala) and it encodes a 'tag peptide', a short internal open reading frame. During trans-translation Ala-aminoacylated tmRNA acts like a tRNA, entering the A-site of stalled ribosomes, displacing the stalled mRNA. The ribosome then switches to translate the ORF on the tmRNA; the nascent peptide is terminated with the 'tag peptide' encoded by the tmRNA and targeted for degradation. The ribosome is freed to recommence translation, which seems to be the essential function of trans-translation. The polypeptide is SsrA-binding protein (Methylobacterium radiotolerans (strain ATCC 27329 / DSM 1819 / JCM 2831 / NBRC 15690 / NCIMB 10815 / 0-1)).